Consider the following 475-residue polypeptide: Glutamate--tRNA ligase 1 (475 aa).

Residues 11 to 21 (PSPTGYLHIGG) carry the 'HIGH' region motif. The 'KMSKS' region motif lies at 240–244 (KLSKR). Lys243 is an ATP binding site.

This sequence belongs to the class-I aminoacyl-tRNA synthetase family. Glutamate--tRNA ligase type 1 subfamily. Monomer.

The protein localises to the cytoplasm. It catalyses the reaction tRNA(Glu) + L-glutamate + ATP = L-glutamyl-tRNA(Glu) + AMP + diphosphate. In terms of biological role, catalyzes the attachment of glutamate to tRNA(Glu) in a two-step reaction: glutamate is first activated by ATP to form Glu-AMP and then transferred to the acceptor end of tRNA(Glu). The chain is Glutamate--tRNA ligase 1 from Methylobacterium radiotolerans (strain ATCC 27329 / DSM 1819 / JCM 2831 / NBRC 15690 / NCIMB 10815 / 0-1).